The chain runs to 341 residues: HTH-type transcriptional repressor PurR (341 aa).

An HTH lacI-type domain is found at 2 to 56 (ATIKDVAKHAGVSTTTVSHVINKTRFVAEDTKAAVWAAIKALNYSPSAVARSLKV). The segment at residues 4 to 23 (IKDVAKHAGVSTTTVSHVIN) is a DNA-binding region (H-T-H motif). A DNA-binding region spans residues 48–56 (SAVARSLKV). Y73, R190, T192, F221, and D275 together coordinate hypoxanthine.

Homodimer.

The protein operates within purine metabolism; purine nucleotide biosynthesis [regulation]. Is the main repressor of the genes involved in the de novo synthesis of purine nucleotides, regulating purB, purC, purEK, purF, purHD, purL, purMN and guaBA expression. PurR is allosterically activated to bind its cognate DNA by binding the purine corepressors, hypoxanthine or guanine, thereby effecting transcription repression. The polypeptide is HTH-type transcriptional repressor PurR (Photorhabdus laumondii subsp. laumondii (strain DSM 15139 / CIP 105565 / TT01) (Photorhabdus luminescens subsp. laumondii)).